Reading from the N-terminus, the 513-residue chain is GMP synthase [glutamine-hydrolyzing] (513 aa).

The 191-residue stretch at 5-195 folds into the Glutamine amidotransferase type-1 domain; the sequence is LVLVIDFGGQ…VYNICGCTGD (191 aa). Residue C82 is the Nucleophile of the active site. Catalysis depends on residues H169 and E171. A GMPS ATP-PPase domain is found at 196 to 388; that stretch reads WKMDSFVEKT…LGIPEKLVFR (193 aa). 223-229 provides a ligand contact to ATP; it reads SGGVDSS.

As to quaternary structure, homodimer.

The catalysed reaction is XMP + L-glutamine + ATP + H2O = GMP + L-glutamate + AMP + diphosphate + 2 H(+). The protein operates within purine metabolism; GMP biosynthesis; GMP from XMP (L-Gln route): step 1/1. Functionally, catalyzes the synthesis of GMP from XMP. The protein is GMP synthase [glutamine-hydrolyzing] of Clostridium botulinum (strain Eklund 17B / Type B).